The sequence spans 353 residues: Inactive ubiquitin thioesterase OTULINL (353 aa).

Positions 1-80 are required for membrane binding; sequence MKATRSAPRE…KWWIGYLQRK (80 aa). Residues 125–353 form the OTU domain; the sequence is KCVRPVKRDN…NDHQYHIPVF (229 aa).

It belongs to the peptidase C65 family. Otulin subfamily. As to quaternary structure, does not bind ubiquitin or ubiquitin-like proteins.

Its subcellular location is the cytoplasm. The protein resides in the endoplasmic reticulum membrane. It is found in the nucleus envelope. Functionally, lacks deubiquitinase activity. The chain is Inactive ubiquitin thioesterase OTULINL from Rattus norvegicus (Rat).